Consider the following 493-residue polypeptide: UDP-N-acetylmuramoylalanine--D-glutamate ligase (493 aa).

Position 126–132 (126–132 (GTNGKTT)) interacts with ATP.

Belongs to the MurCDEF family.

Its subcellular location is the cytoplasm. It carries out the reaction UDP-N-acetyl-alpha-D-muramoyl-L-alanine + D-glutamate + ATP = UDP-N-acetyl-alpha-D-muramoyl-L-alanyl-D-glutamate + ADP + phosphate + H(+). Its pathway is cell wall biogenesis; peptidoglycan biosynthesis. Its function is as follows. Cell wall formation. Catalyzes the addition of glutamate to the nucleotide precursor UDP-N-acetylmuramoyl-L-alanine (UMA). In Mycolicibacterium smegmatis (strain ATCC 700084 / mc(2)155) (Mycobacterium smegmatis), this protein is UDP-N-acetylmuramoylalanine--D-glutamate ligase.